Reading from the N-terminus, the 1191-residue chain is Zinc finger protein ush (1191 aa).

2 disordered regions span residues 1 to 153 (MLSS…PKYP) and 169 to 194 (PDAKELTLPDSRLLAPPPLVKPDTQA). The span at 19 to 28 (VDSRDSKDLS) shows a compositional bias: basic and acidic residues. Over residues 61–73 (IDDDADEDAEFEE) the composition is skewed to acidic residues. Phosphoserine is present on residues S116 and S118. Over residues 130 to 151 (ATPPSEPEASPCPSPSPCPTPK) the composition is skewed to pro residues. The segment at 202–235 (LLKPARFMCLPCGIAFSSPSTLEAHQAYYCSHRI) adopts a CCHC FOG-type 1 zinc-finger fold. Residues C210, C213, H226, and C231 each coordinate Zn(2+). Residues 239 to 274 (DEAGSDKSGAGGSGATAGDAAGLTGGSTEPPAKMAR) form a disordered region. A compositionally biased stretch (low complexity) spans 254–266 (TAGDAAGLTGGST). Residues 279 to 301 (YGCTQCSYSADKKVSLNRHMRMH) form a C2H2-type 1 zinc finger. The disordered stretch occupies residues 304 to 338 (SPAAPTLAGLPSLLQNGIAPPGVTPNPMEDSSSQQ). The CCHC FOG-type 2 zinc-finger motif lies at 335-368 (SSQQTDRYCSHCDIRFNNIKTYRAHKQHYCSSRR). C343, C346, H359, and C364 together coordinate Zn(2+). 3 disordered regions span residues 361–413 (QHYC…ARNK), 504–540 (EPERPSAPSSAAEATEAKSSPPEPKRKEAGLTRESAP), and 601–635 (APSLPSSPSMSPSPKRRAISPRSSGAGSASSMSPP). The segment covering 383 to 394 (AGSGPGSAGGSI) has biased composition (gly residues). 3 stretches are compositionally biased toward low complexity: residues 509-523 (SAPSSAAEATEAKSS), 602-613 (PSLPSSPSMSPS), and 620-635 (SPRSSGAGSASSMSPP). 2 consecutive CCHC FOG-type zinc fingers follow at residues 720–753 (YVKKGVSKCMECNIVFCKYENYLAHKQHYCSARS) and 791–824 (PVAYQQLICAACGIKYTSLDNLRAHQNYYCPKGG). Zn(2+) is bound by residues C728, C731, H744, C749, C799, C802, H815, and C820. C2H2-type zinc fingers lie at residues 882 to 907 (NKCPVCGVVSPTAALAKKHMEMHGTV), 910 to 932 (YRCSICQYKGNTLRGMRTHIRTH), and 983 to 1006 (FNCDYCNYVSTYKGNVLRHMKLMH). A disordered region spans residues 1011 to 1073 (INSPSISPDT…HENNNSPIAT (63 aa)). Phosphoserine is present on residues S1013, S1015, and S1017. Over residues 1025–1040 (VTSNPTTNQHSNSDVS) the composition is skewed to polar residues. The CCHC FOG-type 5 zinc-finger motif lies at 1113–1146 (AAEVMKKYCSTCDISFNYVKTYLAHKQFYCKNKP). 4 residues coordinate Zn(2+): C1121, C1124, H1137, and C1142. S1156 carries the post-translational modification Phosphoserine.

Belongs to the FOG (Friend of GATA) family. Interacts with pnr, although weak this interaction is essential. Interacts with the isoform SrpNC of srp. Interacts with CtBP corepressor. In terms of tissue distribution, first expressed in stage 5 at high levels in the primordium of the amnioserosa. Also expressed in germ band extending embryos in cells of the developing anterior and posterior midgut and in hemocyte precursors present in the cephalic mesoderm. In embryonic stage 8, it is expressed in blood cell precursors. By stage 10, it is expressed in hemocyte precursors that have spread throughout the lateral and ventral head mesoderm. By stage 11, it is expressed in the dorsal ectoderm and in precursor cells of the hemocytes and fat body. As embryogenesis proceeds, it is also expressed in stage 13 plasmatocytes migrating throughout the head mesoderm and down the ventral midline. By late embryogenesis, expression strongly decreases but remains in the dorsal ectoderm during dorsal closure, in cells within, or associated with, the central nervous system, and in plasmatocytes circulating throughout the embryonic hemolymph. During larval development, it is expressed in primary and secondary lobes of lymph glands. Expressed in the dorsal part of the thoracic imaginal disk.

The protein resides in the nucleus. In terms of biological role, transcription regulator that modulates expression mediated by transcription factors of the GATA family such as pnr and srp. Represses transcription of proneural achaete-scute complex (AS-C), which is usually activated by pnr. Involved in cardiogenesis, blood, and eye development. During hematopoiesis, it is required to restrict the number of crystal cells, probably via its interaction with the isoform SrpNC of srp. Negatively regulates expression of sr. Probably acts by interacting with the GATA-type zinc finger of proteins such as pnr and srp, possibly antagonizing the interaction between the GATA-type zinc finger and some cofactor. The polypeptide is Zinc finger protein ush (ush) (Drosophila melanogaster (Fruit fly)).